The following is a 147-amino-acid chain: Small ribosomal subunit protein uS9 (147 aa).

It belongs to the universal ribosomal protein uS9 family.

This chain is Small ribosomal subunit protein uS9 (rps16), found in Dictyostelium discoideum (Social amoeba).